A 194-amino-acid chain; its full sequence is Large ribosomal subunit protein uL10 (194 aa).

A compositionally biased stretch (low complexity) spans 172–187 (EGGAAEAPAEAATEAP). Residues 172-194 (EGGAAEAPAEAATEAPAEAEAES) are disordered.

It belongs to the universal ribosomal protein uL10 family. In terms of assembly, part of the ribosomal stalk of the 50S ribosomal subunit. The N-terminus interacts with L11 and the large rRNA to form the base of the stalk. The C-terminus forms an elongated spine to which L12 dimers bind in a sequential fashion forming a multimeric L10(L12)X complex.

Functionally, forms part of the ribosomal stalk, playing a central role in the interaction of the ribosome with GTP-bound translation factors. This Rhodococcus erythropolis (strain PR4 / NBRC 100887) protein is Large ribosomal subunit protein uL10.